The following is a 178-amino-acid chain: Small ribosomal subunit protein uS5 (178 aa).

In terms of domain architecture, S5 DRBM spans 13–76; it reads LEERVVQINR…EAAKRNLIRV (64 aa). Residues 156–178 are disordered; sequence ASRRDMTPQELMERRTRRETEAA.

Belongs to the universal ribosomal protein uS5 family. Part of the 30S ribosomal subunit. Contacts proteins S4 and S8.

With S4 and S12 plays an important role in translational accuracy. Its function is as follows. Located at the back of the 30S subunit body where it stabilizes the conformation of the head with respect to the body. In Chloroflexus aurantiacus (strain ATCC 29364 / DSM 637 / Y-400-fl), this protein is Small ribosomal subunit protein uS5.